Here is a 341-residue protein sequence, read N- to C-terminus: Cysteine-rich with EGF-like domain protein 2 (341 aa).

Residues 1–24 (MLLSCSIFRLFCIILLLQLGSIYT) form the signal peptide. Residues 136–178 (DCNTCIGGADRPCHGNGKCDGDGTRAGNGKCSCDEGYDGEFCL) enclose the EGF-like domain. 3 disulfide bridges follow: C140–C154, C148–C166, and C168–C177. Residue N190 is glycosylated (N-linked (GlcNAc...) asparagine). 2 FU repeats span residues 193–248 (FFLC…DQYC) and 254–308 (SFSC…NQHC). Positions 291-317 (DIDECTEDPASCSDNQHCLNTDGSFSC) constitute an EGF-like 2; calcium-binding; truncated domain.

Belongs to the CRELD family.

It is found in the secreted. The protein localises to the endoplasmic reticulum. Its function is as follows. Possible role in neuronal acetylcholine receptor transport. In Danio rerio (Zebrafish), this protein is Cysteine-rich with EGF-like domain protein 2 (creld2).